We begin with the raw amino-acid sequence, 376 residues long: Queuine tRNA-ribosyltransferase (376 aa).

Catalysis depends on D89, which acts as the Proton acceptor. Substrate is bound by residues 89–93, D143, Q194, and G221; that span reads DSGGF. Residues 252 to 258 form an RNA binding region; it reads GVGTPSN. D271 (nucleophile) is an active-site residue. The interval 276 to 280 is RNA binding; important for wobble base 34 recognition; that stretch reads ARNGR. Residues C309, C311, C314, and H340 each contribute to the Zn(2+) site.

Belongs to the queuine tRNA-ribosyltransferase family. Homodimer. Within each dimer, one monomer is responsible for RNA recognition and catalysis, while the other monomer binds to the replacement base PreQ1. The cofactor is Zn(2+).

The enzyme catalyses 7-aminomethyl-7-carbaguanine + guanosine(34) in tRNA = 7-aminomethyl-7-carbaguanosine(34) in tRNA + guanine. The protein operates within tRNA modification; tRNA-queuosine biosynthesis. In terms of biological role, catalyzes the base-exchange of a guanine (G) residue with the queuine precursor 7-aminomethyl-7-deazaguanine (PreQ1) at position 34 (anticodon wobble position) in tRNAs with GU(N) anticodons (tRNA-Asp, -Asn, -His and -Tyr). Catalysis occurs through a double-displacement mechanism. The nucleophile active site attacks the C1' of nucleotide 34 to detach the guanine base from the RNA, forming a covalent enzyme-RNA intermediate. The proton acceptor active site deprotonates the incoming PreQ1, allowing a nucleophilic attack on the C1' of the ribose to form the product. After dissociation, two additional enzymatic reactions on the tRNA convert PreQ1 to queuine (Q), resulting in the hypermodified nucleoside queuosine (7-(((4,5-cis-dihydroxy-2-cyclopenten-1-yl)amino)methyl)-7-deazaguanosine). This is Queuine tRNA-ribosyltransferase from Clostridium acetobutylicum (strain ATCC 824 / DSM 792 / JCM 1419 / IAM 19013 / LMG 5710 / NBRC 13948 / NRRL B-527 / VKM B-1787 / 2291 / W).